The sequence spans 182 residues: Glutathione-regulated potassium-efflux system ancillary protein KefG (182 aa).

The protein belongs to the NAD(P)H dehydrogenase (quinone) family. KefG subfamily. Interacts with KefB.

The protein localises to the cell inner membrane. It carries out the reaction a quinone + NADH + H(+) = a quinol + NAD(+). The catalysed reaction is a quinone + NADPH + H(+) = a quinol + NADP(+). In terms of biological role, regulatory subunit of a potassium efflux system that confers protection against electrophiles. Required for full activity of KefB. The protein is Glutathione-regulated potassium-efflux system ancillary protein KefG of Yersinia pestis bv. Antiqua (strain Nepal516).